Here is a 432-residue protein sequence, read N- to C-terminus: Trigger factor (432 aa).

The region spanning 161–246 is the PPIase FKBP-type domain; the sequence is GKRVSIDFVG…VNKVEARQLP (86 aa).

The protein belongs to the FKBP-type PPIase family. Tig subfamily.

It localises to the cytoplasm. It carries out the reaction [protein]-peptidylproline (omega=180) = [protein]-peptidylproline (omega=0). Involved in protein export. Acts as a chaperone by maintaining the newly synthesized protein in an open conformation. Functions as a peptidyl-prolyl cis-trans isomerase. This chain is Trigger factor, found in Vibrio vulnificus (strain CMCP6).